The primary structure comprises 385 residues: Guanine nucleotide-binding protein alpha-5 subunit (385 aa).

A lipid anchor (N-myristoyl glycine) is attached at Gly-2. The S-palmitoyl cysteine moiety is linked to residue Cys-6. The G-alpha domain occupies 32–385 (RKIKMLLLGV…GKNYEDTNLE (354 aa)). Residues 35-48 (KMLLLGVTDSGKST) are G1 motif. GTP-binding positions include 40–47 (GVTDSGKS), 174–180 (IHMRQTT), 199–203 (DVGGQ), 298–301 (NKKD), and Ala-357. 2 residues coordinate Mg(2+): Ser-47 and Thr-180. The tract at residues 172–180 (DLIHMRQTT) is G2 motif. Residues 195-204 (IRLIDVGGQK) are G3 motif. The G4 motif stretch occupies residues 294–301 (MLFLNKKD). A G5 motif region spans residues 355–360 (TQATVT).

Belongs to the G-alpha family. As to quaternary structure, g proteins are composed of 3 units; alpha, beta and gamma. The alpha chain contains the guanine nucleotide binding site.

Guanine nucleotide-binding proteins (G proteins) are involved as modulators or transducers in various transmembrane signaling systems. This is Guanine nucleotide-binding protein alpha-5 subunit (gpa-5) from Caenorhabditis elegans.